A 588-amino-acid polypeptide reads, in one-letter code: Solute carrier family 2, facilitated glucose transporter member 12 (588 aa).

Residues 1–28 (MLAHSTAQDLILQQRSSDDHPQTNPRQT) lie on the Cytoplasmic side of the membrane. The helical transmembrane segment at 29–49 (GCGAFIILSSVIAAISGLLVG) threads the bilayer. Over 50–74 (YELGIISGALLQLQSLLELTCQQQE) the chain is Extracellular. Residues 75-95 (IVVSALLIGALVASLVGGCLI) traverse the membrane as a helical segment. The Cytoplasmic portion of the chain corresponds to 96 to 103 (DLYGRRTT). Residues 104–124 (IIFTSILLVFANLLPVVVVSY) form a helical membrane-spanning segment. Residues 125-131 (GSLIAGR) are Extracellular-facing. Residues 132–152 (IFIGVSISLSAIATCVYIAEL) form a helical membrane-spanning segment. Topologically, residues 153–158 (SPQDKR) are cytoplasmic. The helical transmembrane segment at 159 to 179 (GMLVSLNELMIVAGILLAYIC) threads the bilayer. At 180–191 (NYLFASVNNGWK) the chain is on the extracellular side. The chain crosses the membrane as a helical span at residues 192-212 (YMFGLITPLAALQAVAMFFLP). Over 213 to 272 (RSPRFLIMKGYDDAAGKVLQKLRATTDINEELTAIKSSIKAEYQYKFLDLFCSRDNMRAR) the chain is Cytoplasmic. The helical transmembrane segment at 273–293 (LLIGLTLSFFVQITGQPNILF) threads the bilayer. The Extracellular portion of the chain corresponds to 294-311 (YASTVLKSVGFQSTEAAS). The helical transmembrane segment at 312-332 (LASTGIGVVKVVSTIPAIFLV) threads the bilayer. Residues 333–339 (DKIGSKT) lie on the Cytoplasmic side of the membrane. The helical transmembrane segment at 340 to 360 (FLCIGSAVMAVSLVSVGLVSL) threads the bilayer. Over 361–459 (QLDVNYNNIC…IPEYMKWLCL (99 aa)) the chain is Extracellular. N-linked (GlcNAc...) asparagine glycans are attached at residues asparagine 377, asparagine 395, and asparagine 419. A helical membrane pass occupies residues 460–480 (SSLLAFVAAFSIGLGPMAWLV). The Cytoplasmic portion of the chain corresponds to 481 to 492 (QSEIFPAGIKGR). Residues 493–513 (AFAITSSMNWGMNLLISLTFL) traverse the membrane as a helical segment. The Extracellular portion of the chain corresponds to 514–522 (TLTEMIGLP). Residues 523–543 (WMLFGYALMSIASLVFVIMFV) traverse the membrane as a helical segment. At 544–588 (PNTKGRPLEEISKELANRSYMCNAVCHRRRSKKKLTPVALIQSPA) the chain is on the cytoplasmic side.

It belongs to the major facilitator superfamily. Sugar transporter (TC 2.A.1.1) family. Glucose transporter subfamily.

Its subcellular location is the cell membrane. It localises to the endomembrane system. The protein resides in the cytoplasm. It is found in the perinuclear region. It catalyses the reaction D-glucose(out) = D-glucose(in). Functionally, insulin-regulated facilitative glucose transporter. The sequence is that of Solute carrier family 2, facilitated glucose transporter member 12 from Xenopus laevis (African clawed frog).